Consider the following 298-residue polypeptide: MATH domain and coiled-coil domain-containing protein At3g58280 (298 aa).

The MATH domain occupies 9–128 (KKTFGWVIKD…NGEITIIAEV (120 aa)). Residues 240-288 (NLDWLRQKFDQALEKQIAYDTRIGELEKQVKKRKLAVTELEADLEKEKA) are a coiled coil.

In Arabidopsis thaliana (Mouse-ear cress), this protein is MATH domain and coiled-coil domain-containing protein At3g58280.